The sequence spans 157 residues: UPF0758 protein VC_0510 (157 aa).

The MPN domain occupies 36–157 (ALTNPDATKE…CTSFAERGWL (122 aa)). Positions 107, 109, and 120 each coordinate Zn(2+). The JAMM motif signature appears at 107–120 (HNHPSGDSTPSQAD).

The protein belongs to the UPF0758 family.

This Vibrio cholerae serotype O1 (strain ATCC 39315 / El Tor Inaba N16961) protein is UPF0758 protein VC_0510.